The following is a 368-amino-acid chain: Flagellar P-ring protein (368 aa).

A signal peptide spans 1 to 22 (MLIPLARAVLALALLGAGAAHA).

This sequence belongs to the FlgI family. The basal body constitutes a major portion of the flagellar organelle and consists of four rings (L,P,S, and M) mounted on a central rod.

It is found in the periplasm. Its subcellular location is the bacterial flagellum basal body. In terms of biological role, assembles around the rod to form the L-ring and probably protects the motor/basal body from shearing forces during rotation. In Bordetella bronchiseptica (strain ATCC BAA-588 / NCTC 13252 / RB50) (Alcaligenes bronchisepticus), this protein is Flagellar P-ring protein.